A 644-amino-acid polypeptide reads, in one-letter code: Exoribonuclease 2 (644 aa).

Residues 189–516 form the RNB domain; it reads RQDLTALNFV…NHRLLKAVIK (328 aa). The region spanning 561–643 is the S1 motif domain; sequence NTRFAAEIID…ETRSIIARPA (83 aa).

This sequence belongs to the RNR ribonuclease family. RNase II subfamily.

The protein localises to the cytoplasm. It catalyses the reaction Exonucleolytic cleavage in the 3'- to 5'-direction to yield nucleoside 5'-phosphates.. In terms of biological role, involved in mRNA degradation. Hydrolyzes single-stranded polyribonucleotides processively in the 3' to 5' direction. The chain is Exoribonuclease 2 from Salmonella paratyphi B (strain ATCC BAA-1250 / SPB7).